The chain runs to 362 residues: Dual-specificity RNA methyltransferase RlmN (362 aa).

Glu91 (proton acceptor) is an active-site residue. The Radical SAM core domain occupies 97-333; that stretch reads EDDRGTLCVS…VTTRKTRGED (237 aa). The cysteines at positions 104 and 338 are disulfide-linked. Residues Cys111, Cys115, and Cys118 each coordinate [4Fe-4S] cluster. S-adenosyl-L-methionine is bound by residues 164–165, Ser196, 218–220, and Asn295; these read GE and SLH. Cys338 acts as the S-methylcysteine intermediate in catalysis.

The protein belongs to the radical SAM superfamily. RlmN family. [4Fe-4S] cluster serves as cofactor.

It localises to the cytoplasm. It catalyses the reaction adenosine(2503) in 23S rRNA + 2 reduced [2Fe-2S]-[ferredoxin] + 2 S-adenosyl-L-methionine = 2-methyladenosine(2503) in 23S rRNA + 5'-deoxyadenosine + L-methionine + 2 oxidized [2Fe-2S]-[ferredoxin] + S-adenosyl-L-homocysteine. The catalysed reaction is adenosine(37) in tRNA + 2 reduced [2Fe-2S]-[ferredoxin] + 2 S-adenosyl-L-methionine = 2-methyladenosine(37) in tRNA + 5'-deoxyadenosine + L-methionine + 2 oxidized [2Fe-2S]-[ferredoxin] + S-adenosyl-L-homocysteine. Functionally, specifically methylates position 2 of adenine 2503 in 23S rRNA and position 2 of adenine 37 in tRNAs. m2A2503 modification seems to play a crucial role in the proofreading step occurring at the peptidyl transferase center and thus would serve to optimize ribosomal fidelity. This chain is Dual-specificity RNA methyltransferase RlmN, found in Methylobacillus flagellatus (strain ATCC 51484 / DSM 6875 / VKM B-1610 / KT).